We begin with the raw amino-acid sequence, 637 residues long: Phosphomethylpyrimidine synthase (637 aa).

Substrate-binding positions include asparagine 242, methionine 271, tyrosine 300, histidine 336, 356 to 358 (SRG), 397 to 400 (DGLR), and glutamate 436. Histidine 440 is a Zn(2+) binding site. Residue tyrosine 463 coordinates substrate. Histidine 504 lines the Zn(2+) pocket. [4Fe-4S] cluster-binding residues include cysteine 584, cysteine 587, and cysteine 592.

It belongs to the ThiC family. In terms of assembly, homodimer. It depends on [4Fe-4S] cluster as a cofactor.

The catalysed reaction is 5-amino-1-(5-phospho-beta-D-ribosyl)imidazole + S-adenosyl-L-methionine = 4-amino-2-methyl-5-(phosphooxymethyl)pyrimidine + CO + 5'-deoxyadenosine + formate + L-methionine + 3 H(+). It functions in the pathway cofactor biosynthesis; thiamine diphosphate biosynthesis. Catalyzes the synthesis of the hydroxymethylpyrimidine phosphate (HMP-P) moiety of thiamine from aminoimidazole ribotide (AIR) in a radical S-adenosyl-L-methionine (SAM)-dependent reaction. In Bordetella avium (strain 197N), this protein is Phosphomethylpyrimidine synthase.